The sequence spans 473 residues: Serine incorporator 3 (473 aa).

Over 1-96 (MGAVLGVFSL…KDCDVLVGYK (96 aa)) the chain is Extracellular. Asparagine 34 is a glycosylation site (N-linked (GlcNAc...) asparagine). Residues 97–117 (AVYRISFAMAIFFFVFSLLMF) form a helical membrane-spanning segment. The Cytoplasmic portion of the chain corresponds to 118–132 (KVKTSKDLRAAVHNG). Residues 133–153 (FWFFKIAALIGIMVGSFYIPG) form a helical membrane-spanning segment. Over 154 to 159 (GYFSSV) the chain is Extracellular. Residues 160–180 (WFVVGMIGAALFILIQLVLLV) form a helical membrane-spanning segment. The Cytoplasmic portion of the chain corresponds to 181–203 (DFAHSWNESWVNRMEEGNPRLWY). Residues 204-224 (AALLSFTSAFYILSIICVGLL) form a helical membrane-spanning segment. Residues 225–239 (YTYYTKPDGCTENKF) are Extracellular-facing. A helical membrane pass occupies residues 240–260 (FISINLILCVVASIISIHPKI). Over 261 to 329 (QEHQPRSGLL…VPTPTPPSKS (69 aa)) the chain is Cytoplasmic. Residues 330 to 350 (GSLLDSDNFIGLFVFVLCLLY) form a helical membrane-spanning segment. The Extracellular segment spans residues 351 to 406 (SSIRTSTNSQVDKLTLSGSDSVILGDTTTSGASDEEDGQPRRAVDNEKEGVQYSYS). Phosphoserine is present on serine 371. Residues 407 to 427 (LFHLMLCLASLYIMMTLTSWY) form a helical membrane-spanning segment. The Cytoplasmic portion of the chain corresponds to 428-446 (SPDAKFQSMTSKWPAVWVK). A helical transmembrane segment spans residues 447-467 (ISSSWVCLLLYVWTLVAPLVL). Residues 468–473 (TSRDFS) lie on the Extracellular side of the membrane.

This sequence belongs to the TDE1 family. Post-translationally, N-glycosylated. Ubiquitous. Expression levels were increased fourfold to tenfold in lung tumor tissues compared with normal pulmonary tissues.

It is found in the cell membrane. The protein resides in the golgi apparatus membrane. Its subcellular location is the cytoplasm. The protein localises to the perinuclear region. The catalysed reaction is a 1,2-diacyl-sn-glycero-3-phospho-L-serine(in) = a 1,2-diacyl-sn-glycero-3-phospho-L-serine(out). It catalyses the reaction a 1,2-diacyl-sn-glycero-3-phosphocholine(in) = a 1,2-diacyl-sn-glycero-3-phosphocholine(out). The enzyme catalyses a 1,2-diacyl-sn-glycero-3-phosphoethanolamine(in) = a 1,2-diacyl-sn-glycero-3-phosphoethanolamine(out). Functionally, restriction factor required to restrict infectivity of lentiviruses, such as HIV-1: acts by inhibiting an early step of viral infection. Impairs the penetration of the viral particle into the cytoplasm. Non-ATP-dependent, non-specific lipid transporter for phosphatidylserine, phosphatidylcholine, and phosphatidylethanolamine. Functions as a scramblase that flips lipids in both directions across the membrane. Phospholipid scrambling results in HIV-1 surface exposure of phosphatidylserine and loss of membrane asymmetry, which leads to changes in HIV-1 Env conformation and loss of infectivity. This Homo sapiens (Human) protein is Serine incorporator 3.